Consider the following 110-residue polypeptide: Large ribosomal subunit protein uL22 (110 aa).

It belongs to the universal ribosomal protein uL22 family. Part of the 50S ribosomal subunit.

This protein binds specifically to 23S rRNA; its binding is stimulated by other ribosomal proteins, e.g. L4, L17, and L20. It is important during the early stages of 50S assembly. It makes multiple contacts with different domains of the 23S rRNA in the assembled 50S subunit and ribosome. In terms of biological role, the globular domain of the protein is located near the polypeptide exit tunnel on the outside of the subunit, while an extended beta-hairpin is found that lines the wall of the exit tunnel in the center of the 70S ribosome. The sequence is that of Large ribosomal subunit protein uL22 from Shewanella loihica (strain ATCC BAA-1088 / PV-4).